A 555-amino-acid polypeptide reads, in one-letter code: Glutamine--tRNA ligase (555 aa).

The 'HIGH' region signature appears at 34-44 (PEPNGYLHIGH). ATP contacts are provided by residues 35 to 37 (EPN) and 41 to 47 (HIGHAKS). Positions 67 and 212 each coordinate L-glutamine. ATP-binding positions include Thr231, 261 to 262 (RL), and 269 to 271 (MSK). Residues 268–272 (VMSKR) carry the 'KMSKS' region motif. The interaction with tRNA stretch occupies residues 317–324 (TKQDNTIE).

The protein belongs to the class-I aminoacyl-tRNA synthetase family. As to quaternary structure, monomer.

The protein localises to the cytoplasm. It catalyses the reaction tRNA(Gln) + L-glutamine + ATP = L-glutaminyl-tRNA(Gln) + AMP + diphosphate. This Salmonella paratyphi B (strain ATCC BAA-1250 / SPB7) protein is Glutamine--tRNA ligase.